Consider the following 668-residue polypeptide: DNA ligase (668 aa).

NAD(+)-binding positions include 34–38, 83–84, and Glu-114; these read DTEYD and SL. The active-site N6-AMP-lysine intermediate is the Lys-116. Arg-137, Glu-171, Lys-286, and Lys-310 together coordinate NAD(+). Residues Cys-404, Cys-407, Cys-422, and Cys-427 each contribute to the Zn(2+) site. Residues 588-668 enclose the BRCT domain; sequence NSDSIIANKT…FFDLLKSEKG (81 aa).

This sequence belongs to the NAD-dependent DNA ligase family. LigA subfamily. Mg(2+) is required as a cofactor. It depends on Mn(2+) as a cofactor.

It carries out the reaction NAD(+) + (deoxyribonucleotide)n-3'-hydroxyl + 5'-phospho-(deoxyribonucleotide)m = (deoxyribonucleotide)n+m + AMP + beta-nicotinamide D-nucleotide.. In terms of biological role, DNA ligase that catalyzes the formation of phosphodiester linkages between 5'-phosphoryl and 3'-hydroxyl groups in double-stranded DNA using NAD as a coenzyme and as the energy source for the reaction. It is essential for DNA replication and repair of damaged DNA. This is DNA ligase from Mycoplasma capricolum subsp. capricolum (strain California kid / ATCC 27343 / NCTC 10154).